Here is a 363-residue protein sequence, read N- to C-terminus: Large ribosomal subunit protein uL4A (363 aa).

The residue at position 87 (S87) is a Phosphoserine. The segment at 280-363 (PENIISNADV…EKFLTVLHEN (84 aa)) is C-terminal-extended nuclear localization signal.

Belongs to the universal ribosomal protein uL4 family. Component of the large ribosomal subunit (LSU). Mature yeast ribosomes consist of a small (40S) and a large (60S) subunit. The 40S small subunit contains 1 molecule of ribosomal RNA (18S rRNA) and at least 33 different proteins. The large 60S subunit contains 3 rRNA molecules (25S, 5.8S and 5S rRNA) and at least 46 different proteins. uL4 is associated with the polypeptide exit tunnel. uL4 interacts with its chaperone ACL4 and the nuclear import receptor KAP104.

Its subcellular location is the cytoplasm. The protein localises to the nucleus. Functionally, component of the ribosome, a large ribonucleoprotein complex responsible for the synthesis of proteins in the cell. The small ribosomal subunit (SSU) binds messenger RNAs (mRNAs) and translates the encoded message by selecting cognate aminoacyl-transfer RNA (tRNA) molecules. The large subunit (LSU) contains the ribosomal catalytic site termed the peptidyl transferase center (PTC), which catalyzes the formation of peptide bonds, thereby polymerizing the amino acids delivered by tRNAs into a polypeptide chain. The nascent polypeptides leave the ribosome through a tunnel in the LSU and interact with protein factors that function in enzymatic processing, targeting, and the membrane insertion of nascent chains at the exit of the ribosomal tunnel. uL4 participates in the regulation of the accumulation of its own mRNA. The chain is Large ribosomal subunit protein uL4A (rpl402) from Schizosaccharomyces pombe (strain 972 / ATCC 24843) (Fission yeast).